Here is a 156-residue protein sequence, read N- to C-terminus: Snaclec rhinocetin subunit alpha (156 aa).

The N-terminal stretch at 1-23 is a signal peptide; sequence MGRFIFLSSGWLVVFLSLSGTGA. Intrachain disulfides connect C27–C38, C55–C150, and C125–C142. In terms of domain architecture, C-type lectin spans 34–151; sequence YEGHCYKFFF…CGDNYPFVCM (118 aa).

It belongs to the snaclec family. Heterodimer; disulfide-linked. In terms of tissue distribution, expressed by the venom gland.

The protein localises to the secreted. Antagonist of the alpha-2 subunit of the integrin alpha-2/beta-1 (ITGA2/ITGB1) on human platelets and endothelial cells. This protein inhibits collagen-stimulated activation of human platelets in a dose-dependent manner. In addition, it antagonizes the binding of monoclonal antibodies against the alpha-2 subunit of integrin alpha-2/beta-1 to platelets and it coimmunoprecipitates with this integrin. This Bitis rhinoceros (West African gaboon viper) protein is Snaclec rhinocetin subunit alpha.